The following is a 359-amino-acid chain: 4-hydroxy-3-methylbut-2-en-1-yl diphosphate synthase (flavodoxin) (359 aa).

[4Fe-4S] cluster-binding residues include C264, C267, C299, and E306.

Belongs to the IspG family. Requires [4Fe-4S] cluster as cofactor.

It carries out the reaction (2E)-4-hydroxy-3-methylbut-2-enyl diphosphate + oxidized [flavodoxin] + H2O + 2 H(+) = 2-C-methyl-D-erythritol 2,4-cyclic diphosphate + reduced [flavodoxin]. The protein operates within isoprenoid biosynthesis; isopentenyl diphosphate biosynthesis via DXP pathway; isopentenyl diphosphate from 1-deoxy-D-xylulose 5-phosphate: step 5/6. Functionally, converts 2C-methyl-D-erythritol 2,4-cyclodiphosphate (ME-2,4cPP) into 1-hydroxy-2-methyl-2-(E)-butenyl 4-diphosphate. In Helicobacter pylori (strain G27), this protein is 4-hydroxy-3-methylbut-2-en-1-yl diphosphate synthase (flavodoxin).